Here is a 171-residue protein sequence, read N- to C-terminus: 3-hydroxydecanoyl-[acyl-carrier-protein] dehydratase (171 aa).

The active site involves H71.

Belongs to the thioester dehydratase family. FabA subfamily. In terms of assembly, homodimer.

The protein resides in the cytoplasm. The enzyme catalyses a (3R)-hydroxyacyl-[ACP] = a (2E)-enoyl-[ACP] + H2O. The catalysed reaction is (3R)-hydroxydecanoyl-[ACP] = (2E)-decenoyl-[ACP] + H2O. It catalyses the reaction (2E)-decenoyl-[ACP] = (3Z)-decenoyl-[ACP]. It participates in lipid metabolism; fatty acid biosynthesis. Functionally, necessary for the introduction of cis unsaturation into fatty acids. Catalyzes the dehydration of (3R)-3-hydroxydecanoyl-ACP to E-(2)-decenoyl-ACP and then its isomerization to Z-(3)-decenoyl-ACP. Can catalyze the dehydratase reaction for beta-hydroxyacyl-ACPs with saturated chain lengths up to 16:0, being most active on intermediate chain length. The sequence is that of 3-hydroxydecanoyl-[acyl-carrier-protein] dehydratase from Agrobacterium fabrum (strain C58 / ATCC 33970) (Agrobacterium tumefaciens (strain C58)).